The chain runs to 547 residues: Chaperonin GroEL 1 (547 aa).

Residues 30–33, Lys-51, 87–91, Gly-415, 479–481, and Asp-495 each bind ATP; these read TLGP, DGTTT, and NAA.

This sequence belongs to the chaperonin (HSP60) family. In terms of assembly, forms a cylinder of 14 subunits composed of two heptameric rings stacked back-to-back. Interacts with the co-chaperonin GroES.

It is found in the cytoplasm. The catalysed reaction is ATP + H2O + a folded polypeptide = ADP + phosphate + an unfolded polypeptide.. In terms of biological role, together with its co-chaperonin GroES, plays an essential role in assisting protein folding. The GroEL-GroES system forms a nano-cage that allows encapsulation of the non-native substrate proteins and provides a physical environment optimized to promote and accelerate protein folding. This chain is Chaperonin GroEL 1, found in Vibrio parahaemolyticus serotype O3:K6 (strain RIMD 2210633).